A 253-amino-acid chain; its full sequence is Imidazole glycerol phosphate synthase subunit HisF (253 aa).

Catalysis depends on residues Asp11 and Asp130.

This sequence belongs to the HisA/HisF family. In terms of assembly, heterodimer of HisH and HisF.

The protein resides in the cytoplasm. It carries out the reaction 5-[(5-phospho-1-deoxy-D-ribulos-1-ylimino)methylamino]-1-(5-phospho-beta-D-ribosyl)imidazole-4-carboxamide + L-glutamine = D-erythro-1-(imidazol-4-yl)glycerol 3-phosphate + 5-amino-1-(5-phospho-beta-D-ribosyl)imidazole-4-carboxamide + L-glutamate + H(+). Its pathway is amino-acid biosynthesis; L-histidine biosynthesis; L-histidine from 5-phospho-alpha-D-ribose 1-diphosphate: step 5/9. Functionally, IGPS catalyzes the conversion of PRFAR and glutamine to IGP, AICAR and glutamate. The HisF subunit catalyzes the cyclization activity that produces IGP and AICAR from PRFAR using the ammonia provided by the HisH subunit. This is Imidazole glycerol phosphate synthase subunit HisF from Gluconobacter oxydans (strain 621H) (Gluconobacter suboxydans).